Reading from the N-terminus, the 194-residue chain is Anthranilate synthase component 2 (194 aa).

The Glutamine amidotransferase type-1 domain occupies 2–194 (KIFFIDNFDS…QSVGFLRELS (193 aa)). 57–59 (GPG) is a binding site for L-glutamine. The active-site Nucleophile; for GATase activity is cysteine 84. L-glutamine-binding positions include glutamine 88 and 134-135 (SL). Catalysis depends on for GATase activity residues histidine 170 and glutamate 172.

As to quaternary structure, heterotetramer consisting of two non-identical subunits: a beta subunit (TrpG) and a large alpha subunit (TrpE).

It carries out the reaction chorismate + L-glutamine = anthranilate + pyruvate + L-glutamate + H(+). Its pathway is amino-acid biosynthesis; L-tryptophan biosynthesis; L-tryptophan from chorismate: step 1/5. In terms of biological role, part of a heterotetrameric complex that catalyzes the two-step biosynthesis of anthranilate, an intermediate in the biosynthesis of L-tryptophan. In the first step, the glutamine-binding beta subunit (TrpG) of anthranilate synthase (AS) provides the glutamine amidotransferase activity which generates ammonia as a substrate that, along with chorismate, is used in the second step, catalyzed by the large alpha subunit of AS (TrpE) to produce anthranilate. In the absence of TrpG, TrpE can synthesize anthranilate directly from chorismate and high concentrations of ammonia. The chain is Anthranilate synthase component 2 (trpG) from Helicobacter pylori (strain J99 / ATCC 700824) (Campylobacter pylori J99).